The sequence spans 609 residues: UvrABC system protein C (609 aa).

Residues 16-94 (SSPGVYRMYD…IKQYMPKYNV (79 aa)) form the GIY-YIG domain. The UVR domain maps to 203-238 (QQVMSVLVQKMEQASSDMRYEQAALYRDQITALRRV).

The protein belongs to the UvrC family. As to quaternary structure, interacts with UvrB in an incision complex.

The protein localises to the cytoplasm. The UvrABC repair system catalyzes the recognition and processing of DNA lesions. UvrC both incises the 5' and 3' sides of the lesion. The N-terminal half is responsible for the 3' incision and the C-terminal half is responsible for the 5' incision. The protein is UvrABC system protein C of Shewanella pealeana (strain ATCC 700345 / ANG-SQ1).